A 234-amino-acid chain; its full sequence is Adenosine 5'-phosphosulfate reductase (234 aa).

[4Fe-4S] cluster contacts are provided by cysteine 120, cysteine 121, cysteine 203, and cysteine 206. Cysteine 229 acts as the Nucleophile; cysteine thiosulfonate intermediate in catalysis.

This sequence belongs to the PAPS reductase family. CysH subfamily. The cofactor is [4Fe-4S] cluster.

Its subcellular location is the cytoplasm. The enzyme catalyses [thioredoxin]-disulfide + sulfite + AMP + 2 H(+) = adenosine 5'-phosphosulfate + [thioredoxin]-dithiol. It participates in sulfur metabolism; hydrogen sulfide biosynthesis; sulfite from sulfate. In terms of biological role, catalyzes the formation of sulfite from adenosine 5'-phosphosulfate (APS) using thioredoxin as an electron donor. This is Adenosine 5'-phosphosulfate reductase from Bacillus thuringiensis (strain Al Hakam).